We begin with the raw amino-acid sequence, 784 residues long: Toll-like receptor 2 (784 aa).

The N-terminal stretch at 1–24 is a signal peptide; sequence MLRALWLFWILVAITVLFSKRCSA. Residues 25-587 are Extracellular-facing; sequence QESLSCDASG…ARPSVLECHQ (563 aa). Cysteines 30 and 36 form a disulfide. 19 LRR repeats span residues 54-77, 78-101, 102-125, 126-150, 151-175, 176-199, 200-223, 224-250, 251-278, 279-308, 309-337, 338-361, 362-388, 389-414, 415-437, 438-457, 458-478, 479-500, and 501-524; these read MKSL…ACAN, LQVL…SLGS, LEHL…PLSS, LKYL…NLTN, LQTL…GLTS, LNEL…SIRD, IHHL…ILSS, VRYL…VSSP, MKKL…YILE, LSEV…ELGK, VETV…LLEK, VKRI…HLKS, LEFL…AWPS, LQTL…TLKN, LTSL…WPEK, MRFL…CIPQ, TLEV…FLPR, LQEL…LFPV, and LLVM…SFPK. Asn-147 carries an N-linked (GlcNAc...) asparagine glycan. Cys-353 and Cys-382 are joined by a disulfide. A glycan (N-linked (GlcNAc...) asparagine) is linked at Asn-414. Cysteines 432 and 454 form a disulfide. An N-linked (GlcNAc...) asparagine glycan is attached at Asn-442. Residues 525–576 form the LRRCT domain; that stretch reads LETLEAGDNHFVCSCELLSFTMETPALAQILVDWPDSYLCDSPPRLHGHRLQ. A helical transmembrane segment spans residues 588–608; sequence AALVSGVCCALLLLILLVGAL. At 609-784 the chain is on the cytoplasmic side; that stretch reads CHHFHGLWYL…WVNLRTAIKS (176 aa). Residues 639–782 enclose the TIR domain; that stretch reads VCYDAFVSYS…VFWVNLRTAI (144 aa). Residue Lys-754 forms a Glycyl lysine isopeptide (Lys-Gly) (interchain with G-Cter in ubiquitin) linkage. The short motif at 761–778 is the ATG16L1-binding motif element; that stretch reads YLEWPLDEGQQEVFWVNL.

It belongs to the Toll-like receptor family. Interacts with LY96, TLR1 and TLR6 (via extracellular domain). TLR2 seems to exist in heterodimers with either TLR1 or TLR6 before stimulation by the ligand. The heterodimers form bigger oligomers in response to their corresponding ligands as well as further heterotypic associations with other receptors such as CD14 and/or CD36. Binds MYD88 (via TIR domain). Interacts with TICAM1. Interacts with CNPY3. Interacts with ATG16L1. Interacts with non-modified M.tuberculosis protein MPT83. Interacts with PPP1R11. Interacts with TIRAP. As to quaternary structure, (Microbial infection) Interacts with Staphylococcus aureus protein SSL3; this interaction inhibits TLR2-mediated cytokine production. In terms of assembly, (Microbial infection) Interacts with Toxoplasma gondii micronemal protein 1 (MIC1); the interaction promotes activation of bone marrow-derived dendritic cells and macrophages. Interacts with Toxoplasma gondii micronemal protein 4 (MIC4); the interaction promotes activation of bone marrow-derived dendritic cells and macrophages. Post-translationally, ubiquitinated at Lys-754 by PPP1R11, leading to its degradation. Deubiquitinated by USP2. Glycosylation of Asn-442 is critical for secretion of the N-terminal ectodomain of TLR2. As to expression, detected in a macrophage cell line, smooth muscle, lung, spleen, thymus, brain and adipose tissue. Cell surface expression detected in lung alveolar macrophages, dendritic macrophages and at lower levels in lung macrophages (at protein level).

The protein localises to the cell membrane. It is found in the cytoplasmic vesicle. The protein resides in the phagosome membrane. Its subcellular location is the membrane raft. Functionally, cooperates with LY96 to mediate the innate immune response to bacterial lipoproteins and other microbial cell wall components. Cooperates with TLR1 or TLR6 to mediate the innate immune response to bacterial lipoproteins or lipopeptides. Acts via MYD88 and TRAF6, leading to NF-kappa-B activation, cytokine secretion and the inflammatory response. May also promote apoptosis in response to lipoproteins. Forms activation clusters composed of several receptors depending on the ligand, these clusters trigger signaling from the cell surface and subsequently are targeted to the Golgi in a lipid-raft dependent pathway. Forms the cluster TLR2:TLR6:CD14:CD36 in response to diacylated lipopeptides and TLR2:TLR1:CD14 in response to triacylated lipopeptides. Recognizes M.tuberculosis major T-antigen EsxA (ESAT-6) which inhibits downstream MYD88-dependent signaling. Acts as the major receptor for M.tuberculosis lipoproteins LprA, LprG, LpqH and PhoS1 (pstS1), in conjunction with TLR1 and for some but not all lipoproteins CD14 and/or CD36. The lipoproteins act as agonists to modulate antigen presenting cell functions in response to the pathogen. Recombinant MPT83 from M.tuberculosis stimulates secretion of cytokines (TNF-alpha, IL-6 and IL-12p40) by mouse macrophage cell lines in a TLR2-dependent fashion, which leads to increased host innate immunity responses against the bacterium. Lung macrophages which express low levels of TLR2 respond poorly to stimulation by M.tuberculosis LpqH. Required for normal uptake of M.tuberculosis, a process that is inhibited by M.tuberculosis LppM. Interacts with TICAM2. In terms of biological role, (Microbial infection) Mediates activation of bone marrow-derived dendritic cells and macrophages, and production of pro-inflammatory cytokines, such as IL12 (IL12B/IL12A), triggered by Toxoplasma gondii micronemal protein 4 (MIC4) and micronemal protein 1 (MIC1). This chain is Toll-like receptor 2 (Tlr2), found in Mus musculus (Mouse).